A 92-amino-acid polypeptide reads, in one-letter code: UPF0237 protein MA_3235 (92 aa).

The ACT domain maps to 7 to 81; it reads IITVIGSDRV…KSLGVEVKVQ (75 aa).

This sequence belongs to the UPF0237 family.

This is UPF0237 protein MA_3235 from Methanosarcina acetivorans (strain ATCC 35395 / DSM 2834 / JCM 12185 / C2A).